The following is a 344-amino-acid chain: tRNA N6-adenosine threonylcarbamoyltransferase (344 aa).

The Fe cation site is built by His-110 and His-114. Residues 132–136 (LVSGG), Asp-166, Gly-179, Asp-183, and Asn-278 each bind substrate. Residue Asp-306 coordinates Fe cation.

This sequence belongs to the KAE1 / TsaD family. Fe(2+) is required as a cofactor.

It is found in the cytoplasm. It carries out the reaction L-threonylcarbamoyladenylate + adenosine(37) in tRNA = N(6)-L-threonylcarbamoyladenosine(37) in tRNA + AMP + H(+). In terms of biological role, required for the formation of a threonylcarbamoyl group on adenosine at position 37 (t(6)A37) in tRNAs that read codons beginning with adenine. Is involved in the transfer of the threonylcarbamoyl moiety of threonylcarbamoyl-AMP (TC-AMP) to the N6 group of A37, together with TsaE and TsaB. TsaD likely plays a direct catalytic role in this reaction. The sequence is that of tRNA N6-adenosine threonylcarbamoyltransferase from Nocardia farcinica (strain IFM 10152).